The following is an 876-amino-acid chain: Leucine--tRNA ligase (876 aa).

The short motif at 43–53 (PYPSGRIHMGH) is the 'HIGH' region element. Residues 632–636 (KMSKS) carry the 'KMSKS' region motif. K635 is an ATP binding site.

It belongs to the class-I aminoacyl-tRNA synthetase family.

The protein resides in the cytoplasm. The enzyme catalyses tRNA(Leu) + L-leucine + ATP = L-leucyl-tRNA(Leu) + AMP + diphosphate. This chain is Leucine--tRNA ligase, found in Agrobacterium fabrum (strain C58 / ATCC 33970) (Agrobacterium tumefaciens (strain C58)).